Here is a 384-residue protein sequence, read N- to C-terminus: MTVTLGMPAAPPRPVGTRRLSRQIHVGNVPVGGDAPVSIQSMCTTLTSDVNATLQQIAQLTAAGCQIVRVAVPSQDDADALPTIARKSPIPIIADIHFQPKYVFAAIDAGCAAVRVNPGNIKQFDDKVGEIARAAKAAGTPIRIGVNAGSLDKRLLEKYGKATPEALVESALWEASLFEEHDFRDIKISVKHNDPVIMIQAYRLLAQACDYPLHLGVTEAGPAFQGTVKSAVAFGALLSEGIGDTIRVSLSAPPIEEIKVASAILESLGLRERKLEIVSCPSCGRAQVDVYTLANEVSAGLEGMEVPLRVAVMGCVVNGPGEAREADLGVASGNGKGQIFVRGKVIKTVPEAQIVETLIEEAMRLAEQMEADGAASGSPSVSVA.

[4Fe-4S] cluster contacts are provided by cysteine 280, cysteine 283, cysteine 315, and glutamate 322.

This sequence belongs to the IspG family. The cofactor is [4Fe-4S] cluster.

It carries out the reaction (2E)-4-hydroxy-3-methylbut-2-enyl diphosphate + oxidized [flavodoxin] + H2O + 2 H(+) = 2-C-methyl-D-erythritol 2,4-cyclic diphosphate + reduced [flavodoxin]. It participates in isoprenoid biosynthesis; isopentenyl diphosphate biosynthesis via DXP pathway; isopentenyl diphosphate from 1-deoxy-D-xylulose 5-phosphate: step 5/6. Converts 2C-methyl-D-erythritol 2,4-cyclodiphosphate (ME-2,4cPP) into 1-hydroxy-2-methyl-2-(E)-butenyl 4-diphosphate. The polypeptide is 4-hydroxy-3-methylbut-2-en-1-yl diphosphate synthase (flavodoxin) (Parafrankia sp. (strain EAN1pec)).